The sequence spans 545 residues: Triacylglycerol lipase ptl1 (545 aa).

Residues Leu182–Trp358 enclose the PNPLA domain. Residues Gly213–Gly217 carry the GXSXG motif.

Its subcellular location is the lipid droplet. It carries out the reaction a triacylglycerol + H2O = a diacylglycerol + a fatty acid + H(+). Its function is as follows. Lipid particle-localized triacylglycerol (TAG) lipase. The lipid droplet/particle is a lipid storage compartment which serves as a depot of energy and building blocks for membrane lipid biosynthesis. Involved in the mobilization of the non-polar storage lipids triacylglycerols (TAGs) from lipid particles by hydrolysis of TAGs, releasing and supplying specific fatty acids to the appropriate metabolic pathways. In Schizosaccharomyces pombe (strain 972 / ATCC 24843) (Fission yeast), this protein is Triacylglycerol lipase ptl1 (ptl1).